The sequence spans 360 residues: Cinnamyl alcohol dehydrogenase 2 (360 aa).

Residues 23–351 (GVLSPFNFSR…KADVKYRFVI (329 aa)) enclose the Enoyl reductase (ER) domain. Cys50 contributes to the Zn(2+) binding site. Ser52 lines the an alcohol pocket. Ser52 provides a ligand contact to NADP(+). Residues Asp53, His72, Glu73, Cys103, Cys106, Cys109, Cys117, and Cys166 each coordinate Zn(2+). His72 is an an alcohol binding site. Positions 192, 194, 195, 214, 215, 216, 219, 220, 277, 279, 301, and 348 each coordinate NADP(+).

The protein belongs to the zinc-containing alcohol dehydrogenase family. Class-P subfamily. As to quaternary structure, homodimer. Zn(2+) is required as a cofactor. As to expression, mainly expressed in young roots and, to a lower extent, in stems and leaves.

The protein localises to the cytoplasm. The catalysed reaction is (E)-cinnamyl alcohol + NADP(+) = (E)-cinnamaldehyde + NADPH + H(+). Its function is as follows. Alcohol dehydrogenase that catalyzes the conversion of (E)-cinnamyl alcohol to (E)-cinnamaldehyde. This chain is Cinnamyl alcohol dehydrogenase 2, found in Rauvolfia serpentina (Serpentine wood).